Consider the following 312-residue polypeptide: Aspartate carbamoyltransferase catalytic subunit (312 aa).

Carbamoyl phosphate contacts are provided by Arg-55 and Thr-56. Residue Lys-83 participates in L-aspartate binding. 3 residues coordinate carbamoyl phosphate: Arg-105, His-138, and Gln-141. L-aspartate contacts are provided by Arg-171 and Arg-225. Residues Gly-266 and Pro-267 each contribute to the carbamoyl phosphate site.

It belongs to the aspartate/ornithine carbamoyltransferase superfamily. ATCase family. Heterododecamer (2C3:3R2) of six catalytic PyrB chains organized as two trimers (C3), and six regulatory PyrI chains organized as three dimers (R2).

It carries out the reaction carbamoyl phosphate + L-aspartate = N-carbamoyl-L-aspartate + phosphate + H(+). It functions in the pathway pyrimidine metabolism; UMP biosynthesis via de novo pathway; (S)-dihydroorotate from bicarbonate: step 2/3. Functionally, catalyzes the condensation of carbamoyl phosphate and aspartate to form carbamoyl aspartate and inorganic phosphate, the committed step in the de novo pyrimidine nucleotide biosynthesis pathway. This chain is Aspartate carbamoyltransferase catalytic subunit, found in Corynebacterium efficiens (strain DSM 44549 / YS-314 / AJ 12310 / JCM 11189 / NBRC 100395).